The following is a 613-amino-acid chain: Probable potassium transport system protein Kup 1 (613 aa).

The next 12 helical transmembrane spans lie at 40-60 (VLSM…VVFV), 93-113 (MLLG…TPAI), 127-147 (PALQ…LFLL), 158-178 (LFGP…LFSV), 201-221 (AVQA…AEAL), 237-257 (WFYI…ALLL), 266-286 (PFFL…ATAA), 288-308 (VIAS…AVHL), 327-347 (IYVP…VLAF), 356-376 (AYGI…TVVM), 384-404 (LPAV…FFGA), and 409-429 (VAAG…LMVT).

This sequence belongs to the HAK/KUP transporter (TC 2.A.72) family.

The protein localises to the cell inner membrane. The catalysed reaction is K(+)(in) + H(+)(in) = K(+)(out) + H(+)(out). In terms of biological role, transport of potassium into the cell. Likely operates as a K(+):H(+) symporter. This is Probable potassium transport system protein Kup 1 from Ralstonia nicotianae (strain ATCC BAA-1114 / GMI1000) (Ralstonia solanacearum).